Reading from the N-terminus, the 304-residue chain is Hairy/enhancer-of-split related with YRPW motif protein 1 (304 aa).

The segment at 1–52 (MKRAHPEYSSSESELDETIEVEKESADENGNLSSALGSMSPTTSSQILARKR) is disordered. Residues 28–47 (ENGNLSSALGSMSPTTSSQI) show a composition bias toward polar residues. Positions 48-117 (LARKRRRGII…GGKGYFDAHA (70 aa)) are transcriptional repression and interaction with NCOR1 and SIN3A. The bHLH domain maps to 49 to 104 (ARKRRRGIIEKRRRDRINNSLSELRRLVPSAFEKQGSAKLEKAEILQMTVDHLKML). Residues 122-158 (YRSLGFRECLAEVARYLSIIEGLDASDPLRVRLVSHL) form the Orange domain. Over residues 197 to 211 (SQSTHGNTGTSASPT) the composition is skewed to polar residues. Residues 197–234 (SQSTHGNTGTSASPTESHHQGRLATAHPEASALRAPPS) form a disordered region. The short motif at 294–297 (YRPW) is the YRPW motif element.

The protein belongs to the HEY family. In terms of assembly, self-associates. Interacts with HES1 and HEYL. Interacts with HDAC1, NCOR1 and SIN3A. Interacts with GATA4 and GATA6. Interacts with CCDC89/BOIP.

It localises to the nucleus. Functionally, transcriptional repressor which binds preferentially to the canonical E box sequence 5'-CACGTG-3'. Downstream effector of Notch signaling required for cardiovascular development. Specifically required for the Notch-induced endocardial epithelial to mesenchymal transition, which is itself criticial for cardiac valve and septum development. May be required in conjunction with HEY2 to specify arterial cell fate or identity. Promotes maintenance of neuronal precursor cells and glial versus neuronal fate specification. Represses transcription by the cardiac transcriptional activators GATA4 and GATA6 and by the neuronal bHLH factors ASCL1/MASH1 and NEUROD4/MATH3. The polypeptide is Hairy/enhancer-of-split related with YRPW motif protein 1 (HEY1) (Bos taurus (Bovine)).